Reading from the N-terminus, the 109-residue chain is Iron-sulfur cluster assembly protein CyaY (109 aa).

Belongs to the frataxin family.

Functionally, involved in iron-sulfur (Fe-S) cluster assembly. May act as a regulator of Fe-S biogenesis. The sequence is that of Iron-sulfur cluster assembly protein CyaY from Bordetella petrii (strain ATCC BAA-461 / DSM 12804 / CCUG 43448).